The chain runs to 618 residues: Proline--tRNA ligase (618 aa).

It belongs to the class-II aminoacyl-tRNA synthetase family. ProS type 1 subfamily. Homodimer.

It localises to the cytoplasm. The enzyme catalyses tRNA(Pro) + L-proline + ATP = L-prolyl-tRNA(Pro) + AMP + diphosphate. In terms of biological role, catalyzes the attachment of proline to tRNA(Pro) in a two-step reaction: proline is first activated by ATP to form Pro-AMP and then transferred to the acceptor end of tRNA(Pro). As ProRS can inadvertently accommodate and process non-cognate amino acids such as alanine and cysteine, to avoid such errors it has two additional distinct editing activities against alanine. One activity is designated as 'pretransfer' editing and involves the tRNA(Pro)-independent hydrolysis of activated Ala-AMP. The other activity is designated 'posttransfer' editing and involves deacylation of mischarged Ala-tRNA(Pro). The misacylated Cys-tRNA(Pro) is not edited by ProRS. The sequence is that of Proline--tRNA ligase from Streptococcus pyogenes serotype M3 (strain ATCC BAA-595 / MGAS315).